We begin with the raw amino-acid sequence, 1873 residues long: SAGA complex subunit Spt20 (1873 aa).

This sequence belongs to the SPT20 family. In terms of assembly, component of the Spt-Ada-Gcn5 acetyltransferase (SAGA) complex consisting of wda/Taf5L, Saf6, Taf9, Taf10b, Taf12, Ada1, Spt3, Spt7, Spt20, Sf3b3, Sf3b5, Nipped-A/Tra1, a histone acetyltransferase (HAT) module made up of Gcn5, Ada2b (Isoform B), Ada3 and Sgf29, and a deubiquitinase (DUB) module made up of not/nonstop, Sgf11 and e(y)2 tethered to SAGA by Atxn7.

It localises to the nucleus. Functionally, component of the transcription regulatory complex SAGA, a multiprotein complex that activates transcription by remodeling chromatin and mediating histone acetylation and deubiquitination. The SAGA complex predominantly acetylates histone H3. This chain is SAGA complex subunit Spt20, found in Drosophila melanogaster (Fruit fly).